The chain runs to 132 residues: Small ribosomal subunit protein uS8 (132 aa).

Belongs to the universal ribosomal protein uS8 family. In terms of assembly, part of the 30S ribosomal subunit. Contacts proteins S5 and S12.

One of the primary rRNA binding proteins, it binds directly to 16S rRNA central domain where it helps coordinate assembly of the platform of the 30S subunit. The chain is Small ribosomal subunit protein uS8 from Alkaliphilus metalliredigens (strain QYMF).